Consider the following 1192-residue polypeptide: MARRSQSSSLGDNPLDPNYLRPHYREEYRMAIDALVEDDIEGYYNFLQNANVVDFLSRSEIENIKSTVQTPQSAGNVPELPYGEIDQDESSDTYWPLHSDLDAPGLDLGWPMQQHSFVGPTEVTMLVNPAEPERPSIKEQARRLIKNAHQVIAVVMDIFTDVDIFSDLLEAAARHVPVYILLDEQNAHYFVNMVASCKVNLEMIHMMRVRTVSGVTYFCRTGKSFKGQVMDRFLLTDCRAVISGNYSFMWSFEKIHRCIAHLFLGELVATFDEEFRILFAQSQPLVVENALVPMPQDSYLGNQFGLKRTQSLRNPRGYLRQPELGGYQYGDRLDSILPFRRDDPFRHTIEPSAGPMQVTKYATQQFRMQQSFLDQGRSMLASRQLEMNAFKRHSYAEGTRETYASSRQYMKQRVMNNLEETESHYQREQHYYQSEGMGHDDRGHYDRFNYGLADQHSDSGYPPELEAPGNINVLSSDDLKSDSEKQYNIGGRYDPQGHKRPAAGHAYACQSSPTQPHPPDQKQLFSTGDQVRQSQDPSVKQGLRSWRINSYLSTYEDGGEEGLHQPMGSDAFEDSHQQPDSRLYGSEGPGIHSNIRERPNIPTKPNLDLRPRFGKPIIQDRNQVKDNTSDLGPTSTDTLKPAISASSLASSTDNEKELAEPREISITKHESFRTRINPMLQRSSRLRSSLIFSSSKLEQHNSSQAKSGGELQEEKEESEPIRYSSIVAEILEKRRSLSREPFDWNKHKKADEKDVKHASTGDLTTIQDTKEEPIKEKEKPDNPKPEENKVTQPTVPSASQQITSSLNMNDPASRLQYFKDQQEKRKTSKLELDLGTKSQEAAIKKPETLDTATKVPDVLLTSEQSTVKAQEPTVSQTDPVPHRPVIETKPKPSEVSVDRPYTTNKTLTESIADAPKKEPVKEPTKSLKPFPSPKFLKPFKSSQSSSRRISCGEEILTDATDAEKSELKKSRSFSTSGMSRTESRESLSSLGNSESKDTKALDFLKKQTQRLKGILGPKGDKKHSGVSNSQEDKSMKTVPEVQEEISDKGKPSESISSSTAVENKPSAKPTTSRYQSSTSNIIFSSNLRDDTKVILEQISANSQKTRQQNEESGKGDGGKDDVANSPFQSRNRFSRAPVNPQERDNLLKRIESMRKEKKVYSRFEVLYRSREECCWERGSVEQANQFLIKSIE.

5 disordered regions span residues 435–542, 557–661, 695–720, 737–1082, and 1094–1145; these read EGMG…VKQG, DGGE…LAEP, SKLE…ESEP, LSRE…SNII, and ILEQ…ERDN. Basic and acidic residues predominate over residues 437–447; that stretch reads MGHDDRGHYDR. Composition is skewed to polar residues over residues 523–538 and 629–652; these read QLFS…QDPS and SDLG…ASST. 2 stretches are compositionally biased toward basic and acidic residues: residues 737 to 759 and 768 to 789; these read LSRE…KHAS and DTKE…EENK. Polar residues predominate over residues 790–810; the sequence is VTQPTVPSASQQITSSLNMND. Positions 820–834 are enriched in basic and acidic residues; the sequence is DQQEKRKTSKLELDL. Positions 861–878 are enriched in polar residues; sequence TSEQSTVKAQEPTVSQTD. Basic and acidic residues-rich tracts occupy residues 880–892 and 914–925; these read VPHR…KPKP and APKKEPVKEPTK. Low complexity predominate over residues 926 to 946; sequence SLKPFPSPKFLKPFKSSQSSS. Residues 994–1005 show a composition bias toward basic and acidic residues; it reads ESKDTKALDFLK. The span at 1068 to 1082 shows a compositional bias: polar residues; the sequence is KPTTSRYQSSTSNII. Residues 1107-1122 show a composition bias toward basic and acidic residues; that stretch reads QQNEESGKGDGGKDDV.

This sequence belongs to the FAM83 family.

It localises to the cytoplasm. The protein localises to the cytoskeleton. In terms of biological role, may play a role in keratin cytoskeleton disassembly. The protein is Protein FAM83H of Danio rerio (Zebrafish).